Consider the following 172-residue polypeptide: Translation initiation factor IF-3 (172 aa).

It belongs to the IF-3 family. Monomer.

It localises to the cytoplasm. Its function is as follows. IF-3 binds to the 30S ribosomal subunit and shifts the equilibrium between 70S ribosomes and their 50S and 30S subunits in favor of the free subunits, thus enhancing the availability of 30S subunits on which protein synthesis initiation begins. This chain is Translation initiation factor IF-3, found in Bartonella quintana (strain Toulouse) (Rochalimaea quintana).